The sequence spans 331 residues: Glucokinase (331 aa).

13–18 (GDIGGT) lines the ATP pocket.

Belongs to the bacterial glucokinase family.

It is found in the cytoplasm. The catalysed reaction is D-glucose + ATP = D-glucose 6-phosphate + ADP + H(+). This chain is Glucokinase, found in Caulobacter vibrioides (strain ATCC 19089 / CIP 103742 / CB 15) (Caulobacter crescentus).